Consider the following 192-residue polypeptide: MVHRQLPETVLLLLVSSTIFSLEPKRIPFQLWMNRESLQLLKPLPSSSVQQCLAHRKNFLLPQQPVSPHQYQEGQVLAVVHEILQQIFTLLQTHGTMGIWEENHIEKVLAALHRQLEYVESLGGLNAAQKSGGSSAQNLRLQIKAYFRRIHDYLENQRYSSCAWIIVQTEIHRCMFFVFRFTTWLSRQDPDP.

Residues 1–21 form the signal peptide; sequence MVHRQLPETVLLLLVSSTIFS. Cysteines 52 and 162 form a disulfide.

This sequence belongs to the alpha/beta interferon family. Expressed at very high levels in uterus and, at much lower levels, in ovary and cervix. Very low levels, if any, in other organs. In the endometrium, expressed in the luminal and glandular epithelial cells (at protein level).

The protein localises to the secreted. Type I interferon required for maintaining basal levels of IFN-regulated genes, including 2'-5'-oligoadenylate synthetase, IRF7 and ISG15, in the female reproductive tract. Directly mediates protection against viral, including HSV-2, and bacterial, including Chlamydia muridarum, genital infections. The sequence is that of Interferon epsilon (Ifne) from Mus musculus (Mouse).